The following is a 92-amino-acid chain: Small ribosomal subunit protein uS19 (92 aa).

It belongs to the universal ribosomal protein uS19 family.

Functionally, protein S19 forms a complex with S13 that binds strongly to the 16S ribosomal RNA. In Bacillus cytotoxicus (strain DSM 22905 / CIP 110041 / 391-98 / NVH 391-98), this protein is Small ribosomal subunit protein uS19.